The following is a 163-amino-acid chain: NADH-quinone oxidoreductase subunit I (163 aa).

4Fe-4S ferredoxin-type domains follow at residues 54-84 (LRRY…IDSH) and 94-123 (TRYD…LTRL). Positions 64, 67, 70, 74, 103, 106, 109, and 113 each coordinate [4Fe-4S] cluster.

This sequence belongs to the complex I 23 kDa subunit family. As to quaternary structure, NDH-1 is composed of 14 different subunits. Subunits NuoA, H, J, K, L, M, N constitute the membrane sector of the complex. [4Fe-4S] cluster is required as a cofactor.

Its subcellular location is the cell inner membrane. It carries out the reaction a quinone + NADH + 5 H(+)(in) = a quinol + NAD(+) + 4 H(+)(out). In terms of biological role, NDH-1 shuttles electrons from NADH, via FMN and iron-sulfur (Fe-S) centers, to quinones in the respiratory chain. The immediate electron acceptor for the enzyme in this species is believed to be ubiquinone. Couples the redox reaction to proton translocation (for every two electrons transferred, four hydrogen ions are translocated across the cytoplasmic membrane), and thus conserves the redox energy in a proton gradient. The protein is NADH-quinone oxidoreductase subunit I of Halorhodospira halophila (strain DSM 244 / SL1) (Ectothiorhodospira halophila (strain DSM 244 / SL1)).